Here is a 212-residue protein sequence, read N- to C-terminus: ER lumen protein-retaining receptor 2 (212 aa).

The Lumenal segment spans residues 1-4 (MNIF). A helical transmembrane segment spans residues 5-24 (RLTGDLSHLAAIVILLLKIW). At 25 to 32 (KTRSCAGI) the chain is on the cytoplasmic side. A helical membrane pass occupies residues 33-52 (SGKSQLLFALVFTTRYLDLF). Residues 47-48 (RY) form an interaction with the K-D-E-L motif on target proteins region. Topologically, residues 53–58 (TSFISL) are lumenal. Residues 59-79 (YNTSMKVIYLACSYATVYLIY) form a helical membrane-spanning segment. Residues 80–92 (LKFKATYDGNHDT) lie on the Cytoplasmic side of the membrane. A helical membrane pass occupies residues 93 to 110 (FRVEFLVVPVGGLSFLVN). Topologically, residues 111-116 (HDFSPL) are lumenal. Residues 117-135 (EILWTFSIYLESVAILPQL) form a helical membrane-spanning segment. The Cytoplasmic segment spans residues 136-149 (FMISKTGEAETITT). A helical transmembrane segment spans residues 150 to 168 (HYLFFLGLYRALYLVNWIW). Residues 159-169 (RALYLVNWIWR) form an interaction with the K-D-E-L motif on target proteins region. Over 169 to 178 (RFYFEGFFDL) the chain is Lumenal. Residues 179 to 199 (IAVVAGVVQTILYCDFFYLYI) form a helical membrane-spanning segment. Residues 200–212 (TKVLKGKKLSLPA) lie on the Cytoplasmic side of the membrane. Positions 204–207 (KGKK) are important for recycling of cargo proteins with the sequence motif K-D-E-L from the Golgi to the endoplasmic reticulum.

It belongs to the ERD2 family.

The protein localises to the endoplasmic reticulum membrane. Its subcellular location is the golgi apparatus membrane. It localises to the cytoplasmic vesicle. It is found in the COPI-coated vesicle membrane. Functionally, membrane receptor that binds the K-D-E-L sequence motif in the C-terminal part of endoplasmic reticulum resident proteins and maintains their localization in that compartment by participating to their vesicle-mediated recycling back from the Golgi. Binding is pH dependent, and is optimal at pH 5-5.4. The chain is ER lumen protein-retaining receptor 2 (KDELR2) from Homo sapiens (Human).